The chain runs to 1213 residues: Hybrid signal transduction histidine kinase K (1213 aa).

Disordered stretches follow at residues 1–37 (MIEL…NKTN), 98–189 (NNNY…SSSS), 279–392 (NKNV…IPFR), and 495–565 (TTEQ…NYNN). Low complexity-rich tracts occupy residues 98–162 (NNNY…QKDQ), 171–189 (SLSS…SSSS), 279–331 (NKNV…NSGA), 339–371 (NNNN…SNNN), 498–511 (QQQQ…QQQQ), and 522–565 (QRQQ…NYNN). A run of 6 helical transmembrane segments spans residues 600-618 (IIFN…GSNI), 628-648 (LIIG…IFFW), 652-672 (INKP…SLVI), 676-696 (TGSI…ALTI), 729-749 (IQWS…NLYG), and 768-788 (IIDV…QYFI). Residues 822 to 1052 (TMSHEIRTPL…TFWFILPLEE (231 aa)) enclose the Histidine kinase domain. At histidine 825 the chain carries Phosphohistidine; by autocatalysis. The Response regulatory domain occupies 1076 to 1199 (KVLIAEDNII…QLRSAIEMAI (124 aa)). Aspartate 1125 carries the post-translational modification 4-aspartylphosphate.

In terms of processing, activation probably requires transfer of a phosphate group between a histidine in the kinase core (transmitter) domain and an aspartate of the receiver domain.

Its subcellular location is the nucleus membrane. The catalysed reaction is ATP + protein L-histidine = ADP + protein N-phospho-L-histidine.. Functionally, involved in a signal transduction pathway that regulates morphogenesis and controls entry into the culmination stage. May act via the regA pathway, being activated by a morphogenesis-stimulated ligand, reducing phosphodiesterase regA levels and allowing cAMP level to rise to promote the culmination stage. This protein probably undergoes an ATP-dependent autophosphorylation at a conserved histidine residue in the kinase core, and a phosphoryl group is then transferred to a conserved aspartate residue in the receiver domain. This Dictyostelium discoideum (Social amoeba) protein is Hybrid signal transduction histidine kinase K (dhkK).